The chain runs to 370 residues: Asporin (370 aa).

The first 15 residues, 1 to 15 (MKVYVLLVFLTLCSA), serve as a signal peptide directing secretion. An O-linked (GalNAc...) serine glycan is attached at S45. Positions 56–92 (FFPFDLFSTCPFGCQCYSRVVHCSDLGLSSVPSNIPF) constitute an LRRNT domain. 2 disulfide bridges follow: C65–C71 and C69–C78. LRR repeat units follow at residues 93 to 114 (DTRM…DFKG), 117 to 138 (SLYA…AFLT), 141 to 163 (KLRR…PKSL), 164 to 183 (AELR…TFKG), 186 to 209 (ALHV…AFEG), 232 to 253 (TLLE…DFKR), 256 to 277 (DLQR…SLAN), 280 to 302 (RVRE…QELK), 303 to 324 (YLQI…DFCP), 332 to 354 (SLYS…PATF), and 355 to 370 (RCVL…NFRK). N-linked (GlcNAc...) asparagine glycosylation occurs at N272. Cysteines 323 and 356 form a disulfide.

The protein belongs to the small leucine-rich proteoglycan (SLRP) family. SLRP class I subfamily.

Its subcellular location is the secreted. The protein localises to the extracellular space. It localises to the extracellular matrix. The protein is Asporin (ASPN) of Bos taurus (Bovine).